A 310-amino-acid polypeptide reads, in one-letter code: Phosphoribosylaminoimidazole-succinocarboxamide synthase (310 aa).

Belongs to the SAICAR synthetase family.

It carries out the reaction 5-amino-1-(5-phospho-D-ribosyl)imidazole-4-carboxylate + L-aspartate + ATP = (2S)-2-[5-amino-1-(5-phospho-beta-D-ribosyl)imidazole-4-carboxamido]succinate + ADP + phosphate + 2 H(+). Its pathway is purine metabolism; IMP biosynthesis via de novo pathway; 5-amino-1-(5-phospho-D-ribosyl)imidazole-4-carboxamide from 5-amino-1-(5-phospho-D-ribosyl)imidazole-4-carboxylate: step 1/2. This chain is Phosphoribosylaminoimidazole-succinocarboxamide synthase, found in Xanthomonas axonopodis pv. citri (strain 306).